Here is a 160-residue protein sequence, read N- to C-terminus: 6,7-dimethyl-8-ribityllumazine synthase (160 aa).

5-amino-6-(D-ribitylamino)uracil-binding positions include Phe23, 61 to 63, and 85 to 87; these read SFE and AVI. Residue 90–91 coordinates (2S)-2-hydroxy-3-oxobutyl phosphate; it reads DT. His93 acts as the Proton donor in catalysis. Phe118 lines the 5-amino-6-(D-ribitylamino)uracil pocket. Arg132 contacts (2S)-2-hydroxy-3-oxobutyl phosphate.

This sequence belongs to the DMRL synthase family.

It carries out the reaction (2S)-2-hydroxy-3-oxobutyl phosphate + 5-amino-6-(D-ribitylamino)uracil = 6,7-dimethyl-8-(1-D-ribityl)lumazine + phosphate + 2 H2O + H(+). Its pathway is cofactor biosynthesis; riboflavin biosynthesis; riboflavin from 2-hydroxy-3-oxobutyl phosphate and 5-amino-6-(D-ribitylamino)uracil: step 1/2. Catalyzes the formation of 6,7-dimethyl-8-ribityllumazine by condensation of 5-amino-6-(D-ribitylamino)uracil with 3,4-dihydroxy-2-butanone 4-phosphate. This is the penultimate step in the biosynthesis of riboflavin. This Parasynechococcus marenigrum (strain WH8102) protein is 6,7-dimethyl-8-ribityllumazine synthase.